Reading from the N-terminus, the 361-residue chain is tRNA pseudouridine synthase D (361 aa).

Asp76 acts as the Nucleophile in catalysis. Residues 151 to 318 form the TRUD domain; the sequence is GIPNYFGYQR…EQGSRRLAWI (168 aa).

The protein belongs to the pseudouridine synthase TruD family.

It catalyses the reaction uridine(13) in tRNA = pseudouridine(13) in tRNA. In terms of biological role, responsible for synthesis of pseudouridine from uracil-13 in transfer RNAs. This is tRNA pseudouridine synthase D from Wolinella succinogenes (strain ATCC 29543 / DSM 1740 / CCUG 13145 / JCM 31913 / LMG 7466 / NCTC 11488 / FDC 602W) (Vibrio succinogenes).